The chain runs to 258 residues: MNSILERIAKHKLEEVAVAKKNKPLHVLSKQQPGEIRDFITALKSNTSPAVIAEIKKASPSKGLIRKDFNVAEIAKIYTQNGARCLSVLTDIEFFQGHPDYLALAKSKTTLPVLRKDFIIDSYQIYESLVLGADCILLIVALLDDVQLMDFCQLAQELKMSVLVESHTQDELERALRLPTPLIGINNRSLHNFKTDIQLSIQLKQFVPKDKIIITESGINTREDIKLMQSHDINAFLIGESLMRADNIGKALQKLMTD.

The protein belongs to the TrpC family.

It carries out the reaction 1-(2-carboxyphenylamino)-1-deoxy-D-ribulose 5-phosphate + H(+) = (1S,2R)-1-C-(indol-3-yl)glycerol 3-phosphate + CO2 + H2O. The protein operates within amino-acid biosynthesis; L-tryptophan biosynthesis; L-tryptophan from chorismate: step 4/5. The polypeptide is Indole-3-glycerol phosphate synthase (Legionella pneumophila (strain Lens)).